The primary structure comprises 250 residues: NAD(P)H-quinone oxidoreductase subunit K (250 aa).

[4Fe-4S] cluster-binding residues include Cys-60, Cys-61, Cys-125, and Cys-156. The disordered stretch occupies residues 230 to 250 (ELNTSEIDASPASQPSSTYES). Residues 231–250 (LNTSEIDASPASQPSSTYES) are compositionally biased toward polar residues.

This sequence belongs to the complex I 20 kDa subunit family. NDH-1 can be composed of about 15 different subunits; different subcomplexes with different compositions have been identified which probably have different functions. It depends on [4Fe-4S] cluster as a cofactor.

It localises to the cellular thylakoid membrane. It catalyses the reaction a plastoquinone + NADH + (n+1) H(+)(in) = a plastoquinol + NAD(+) + n H(+)(out). The catalysed reaction is a plastoquinone + NADPH + (n+1) H(+)(in) = a plastoquinol + NADP(+) + n H(+)(out). Functionally, NDH-1 shuttles electrons from an unknown electron donor, via FMN and iron-sulfur (Fe-S) centers, to quinones in the respiratory and/or the photosynthetic chain. The immediate electron acceptor for the enzyme in this species is believed to be plastoquinone. Couples the redox reaction to proton translocation, and thus conserves the redox energy in a proton gradient. Cyanobacterial NDH-1 also plays a role in inorganic carbon-concentration. This Prochlorococcus marinus (strain MIT 9303) protein is NAD(P)H-quinone oxidoreductase subunit K.